We begin with the raw amino-acid sequence, 411 residues long: Protein translocase subunit SecY (411 aa).

10 helical membrane-spanning segments follow: residues Phe-13–Asp-33, Ile-52–Ile-72, Ala-111–Phe-131, Phe-135–Leu-155, Gly-163–Leu-180, Ser-197–Val-217, Gly-252–Leu-272, Leu-291–Val-311, Phe-350–Ala-370, and Gly-377–Ile-397.

The protein belongs to the SecY/SEC61-alpha family. In terms of assembly, component of the plastid Sec protein translocase complex, which is composed of at least SecY, SecE and SecG.

The protein localises to the plastid. It is found in the chloroplast thylakoid membrane. Functionally, the central subunit of the protein translocation channel SecYE. Consists of two halves formed by TMs 1-5 and 6-10. These two domains form a lateral gate at the front which open onto the bilayer between TMs 2 and 7, and are clamped together by SecE at the back. The channel is closed by both a pore ring composed of hydrophobic SecY resides and a short helix (helix 2A) on the extracellular side of the membrane which forms a plug. This is Protein translocase subunit SecY from Porphyra purpurea (Red seaweed).